Reading from the N-terminus, the 1240-residue chain is DNA excision repair protein ERCC-6-like (1240 aa).

Serine 14 carries the post-translational modification Phosphoserine. A TPR 1 repeat occupies 21-54 (YLRYVQEAKEAAKNGDLEESLKLFNLAKDIFPTK). Positions 110–278 (SLYKDGRKGG…WSLFDFACQG (169 aa)) constitute a Helicase ATP-binding domain. 123–130 (DDMGLGKT) contributes to the ATP binding site. Positions 229–232 (DEAH) match the DEAH box motif. The region spanning 467 to 631 (FLMSLLERLQ…FTKQELKELF (165 aa)) is the Helicase C-terminal domain. Positions 736 to 760 (FPSQQKKKGTEFNKPQPQPSRLLTK) are disordered. The segment covering 748–760 (NKPQPQPSRLLTK) has biased composition (polar residues). Residues serine 755 and serine 773 each carry the phosphoserine modification. The tract at residues 778 to 813 (DQSAESEPQEHSEVHDVTSLQGSHHFNSTSDAGTIA) is disordered. Positions 795 to 809 (TSLQGSHHFNSTSDA) are enriched in polar residues. A Phosphoserine modification is found at serine 821. Residues 845–879 (QKKGLQASPGQEAPSENLGSFHYLPRESSKASLGP) form a disordered region. 4 positions are modified to phosphoserine: serine 966, serine 998, serine 1001, and serine 1021. Residues 974–1085 (KEKSLQSPAA…EVNTSLHSRR (112 aa)) are disordered. A compositionally biased stretch (polar residues) spans 978 to 998 (LQSPAANSRAKSALTLSLDSS). The segment covering 1049 to 1065 (SVKQFDASTPQSGSNPS) has biased composition (polar residues). Threonine 1057 carries the phosphothreonine modification. Phosphoserine is present on residues serine 1092 and serine 1112. Residues 1104-1117 (MEERLDNSSEEESE) are compositionally biased toward acidic residues. Positions 1104–1185 (MEERLDNSSE…MPDPPQDLAV (82 aa)) are disordered. Residues 1135 to 1165 (EQPSGATLASGNKSSNLTMSEPTSPAPQSSP) are compositionally biased toward polar residues. A Phosphoserine modification is found at serine 1172. One copy of the TPR 2 repeat lies at 1191–1224 (YESLVARGKELKECGKIQEALNCLVKALDIKSAD).

The protein belongs to the SNF2/RAD54 helicase family. As to quaternary structure, interacts with PLK1, which phosphorylates it. Both proteins are mutually dependent on each other for correct subcellular localization. Interacts (via N-terminal TPR repeat) with BEND3 (via BEN domains 1 and 3); the interaction is direct. In terms of processing, phosphorylation by PLK1 prevents the association with chromosome arms and restricts its localization to the kinetochore-centromere region. Expressed mainly in the neural tube and heart of 10.5 dpc embryo. Significantly down-regulated after alcohol exposure in embryonic brain and heart, but not in embryonic kidney, liver, or lung.

It is found in the chromosome. It localises to the centromere. The protein resides in the kinetochore. The enzyme catalyses ATP + H2O = ADP + phosphate + H(+). Its function is as follows. DNA helicase that acts as a tension sensor that associates with catenated DNA which is stretched under tension until it is resolved during anaphase. Functions as ATP-dependent DNA translocase. Can promote Holliday junction branch migration (in vitro). The chain is DNA excision repair protein ERCC-6-like (Ercc6l) from Mus musculus (Mouse).